Here is a 157-residue protein sequence, read N- to C-terminus: Peptide methionine sulfoxide reductase MsrA (157 aa).

C10 is an active-site residue.

Belongs to the MsrA Met sulfoxide reductase family.

It catalyses the reaction L-methionyl-[protein] + [thioredoxin]-disulfide + H2O = L-methionyl-(S)-S-oxide-[protein] + [thioredoxin]-dithiol. The enzyme catalyses [thioredoxin]-disulfide + L-methionine + H2O = L-methionine (S)-S-oxide + [thioredoxin]-dithiol. Its function is as follows. Has an important function as a repair enzyme for proteins that have been inactivated by oxidation. Catalyzes the reversible oxidation-reduction of methionine sulfoxide in proteins to methionine. The sequence is that of Peptide methionine sulfoxide reductase MsrA from Clostridium perfringens (strain SM101 / Type A).